Consider the following 378-residue polypeptide: Putative F-box only protein 15 (378 aa).

An F-box domain is found at K5 to L52.

The chain is Putative F-box only protein 15 (FBX15) from Arabidopsis thaliana (Mouse-ear cress).